We begin with the raw amino-acid sequence, 423 residues long: Transmembrane protein 130 (423 aa).

The N-terminal stretch at methionine 1–alanine 24 is a signal peptide. Residues glycine 25–proline 339 are Extracellular-facing. 3 N-linked (GlcNAc...) asparagine glycosylation sites follow: asparagine 34, asparagine 197, and asparagine 300. The PKD domain maps to tryptophan 147 to serine 233. Residues alanine 340 to methionine 360 form a helical membrane-spanning segment. Residues threonine 361–valine 423 are Cytoplasmic-facing.

It localises to the golgi apparatus membrane. This is Transmembrane protein 130 (TMEM130) from Pongo abelii (Sumatran orangutan).